The chain runs to 410 residues: Protein translocase subunit SecY (410 aa).

The next 9 helical transmembrane spans lie at 61–81 (LSVF…IQIL), 106–126 (ITKY…VLRL), 135–155 (LYFI…VMWL), 170–190 (VIIF…QLFV), 195–215 (FLDF…IVFV), 248–268 (QGGV…DYVI), 289–309 (ILFL…YCSL), 349–369 (LFGS…EFVF), and 373–393 (VFKG…IDLI).

Belongs to the SecY/SEC61-alpha family. As to quaternary structure, component of the plastid Sec protein translocase complex, which is composed of at least SecY and SecE.

It localises to the plastid. It is found in the chloroplast thylakoid membrane. The central subunit of the protein translocation channel SecYE. Consists of two halves formed by TMs 1-5 and 6-10. These two domains form a lateral gate at the front which open onto the bilayer between TMs 2 and 7, and are clamped together by SecE at the back. The channel is closed by both a pore ring composed of hydrophobic SecY resides and a short helix (helix 2A) on the extracellular side of the membrane which forms a plug. This Cyanidium caldarium (Red alga) protein is Protein translocase subunit SecY.